The following is a 275-amino-acid chain: Elongation factor Ts (275 aa).

Lys36 participates in a covalent cross-link: Isoglutamyl lysine isopeptide (Lys-Gln) (interchain with Q-Cter in protein Pup). An involved in Mg(2+) ion dislocation from EF-Tu region spans residues 76–79 (TDFV).

Belongs to the EF-Ts family.

Its subcellular location is the cytoplasm. Its function is as follows. Associates with the EF-Tu.GDP complex and induces the exchange of GDP to GTP. It remains bound to the aminoacyl-tRNA.EF-Tu.GTP complex up to the GTP hydrolysis stage on the ribosome. In Mycolicibacterium smegmatis (strain ATCC 700084 / mc(2)155) (Mycobacterium smegmatis), this protein is Elongation factor Ts.